Consider the following 225-residue polypeptide: uncharacterized protein (225 aa).

This is an uncharacterized protein from Dictyostelium discoideum (Social amoeba).